The chain runs to 356 residues: tRNA-specific 2-thiouridylase MnmA (356 aa).

ATP-binding positions include 6 to 13 and leucine 32; that span reads AMSGGVDS. Cysteine 101 acts as the Nucleophile in catalysis. Cysteine 101 and cysteine 193 are oxidised to a cystine. An ATP-binding site is contributed by glycine 125. The interval 143-145 is interaction with tRNA; that stretch reads KDQ. The active-site Cysteine persulfide intermediate is cysteine 193.

The protein belongs to the MnmA/TRMU family.

The protein resides in the cytoplasm. The enzyme catalyses S-sulfanyl-L-cysteinyl-[protein] + uridine(34) in tRNA + AH2 + ATP = 2-thiouridine(34) in tRNA + L-cysteinyl-[protein] + A + AMP + diphosphate + H(+). Its function is as follows. Catalyzes the 2-thiolation of uridine at the wobble position (U34) of tRNA, leading to the formation of s(2)U34. This Mycolicibacterium smegmatis (strain ATCC 700084 / mc(2)155) (Mycobacterium smegmatis) protein is tRNA-specific 2-thiouridylase MnmA.